The chain runs to 693 residues: Elongation factor G (693 aa).

The 275-residue stretch at 8-282 (EKTRNIGIMA…AVIDYLPSPL (275 aa)) folds into the tr-type G domain. Residues 17–24 (AHVDAGKT), 81–85 (DTPGH), and 135–138 (NKMD) contribute to the GTP site.

Belongs to the TRAFAC class translation factor GTPase superfamily. Classic translation factor GTPase family. EF-G/EF-2 subfamily.

The protein localises to the cytoplasm. Functionally, catalyzes the GTP-dependent ribosomal translocation step during translation elongation. During this step, the ribosome changes from the pre-translocational (PRE) to the post-translocational (POST) state as the newly formed A-site-bound peptidyl-tRNA and P-site-bound deacylated tRNA move to the P and E sites, respectively. Catalyzes the coordinated movement of the two tRNA molecules, the mRNA and conformational changes in the ribosome. This Streptococcus pneumoniae (strain CGSP14) protein is Elongation factor G.